Reading from the N-terminus, the 219-residue chain is Octanoyltransferase (219 aa).

Residues 34-209 (SESPDELWIV…TFSQLLGYQH (176 aa)) enclose the BPL/LPL catalytic domain. Substrate is bound by residues 73-80 (RGGQVTYH), 140-142 (SLG), and 153-155 (GLA). Cysteine 171 serves as the catalytic Acyl-thioester intermediate.

The protein belongs to the LipB family.

The protein localises to the cytoplasm. It carries out the reaction octanoyl-[ACP] + L-lysyl-[protein] = N(6)-octanoyl-L-lysyl-[protein] + holo-[ACP] + H(+). Its pathway is protein modification; protein lipoylation via endogenous pathway; protein N(6)-(lipoyl)lysine from octanoyl-[acyl-carrier-protein]: step 1/2. Catalyzes the transfer of endogenously produced octanoic acid from octanoyl-acyl-carrier-protein onto the lipoyl domains of lipoate-dependent enzymes. Lipoyl-ACP can also act as a substrate although octanoyl-ACP is likely to be the physiological substrate. This chain is Octanoyltransferase, found in Shewanella putrefaciens (strain CN-32 / ATCC BAA-453).